The sequence spans 208 residues: Peptidyl-tRNA hydrolase 2 (208 aa).

Over residues 32–45 (SNASSTKKSSATLL) the composition is skewed to low complexity. Residues 32-81 (SNASSTKKSSATLLRSKEMKEGKLHNDTDEEESESEDESDEDEDIESTSL) are disordered. Over residues 46-58 (RSKEMKEGKLHND) the composition is skewed to basic and acidic residues. Residues 59 to 77 (TDEEESESEDESDEDEDIE) are compositionally biased toward acidic residues. Residue Lys152 forms a Glycyl lysine isopeptide (Lys-Gly) (interchain with G-Cter in ubiquitin) linkage.

It belongs to the PTH2 family.

The protein resides in the cytoplasm. The enzyme catalyses an N-acyl-L-alpha-aminoacyl-tRNA + H2O = an N-acyl-L-amino acid + a tRNA + H(+). Its function is as follows. The natural substrate for this enzyme may be peptidyl-tRNAs which drop off the ribosome during protein synthesis. The chain is Peptidyl-tRNA hydrolase 2 from Saccharomyces cerevisiae (strain ATCC 204508 / S288c) (Baker's yeast).